The sequence spans 145 residues: Large ribosomal subunit protein uL15 (145 aa).

Composition is skewed to basic residues over residues M1–G13 and T22–G33. Positions M1 to K41 are disordered.

Belongs to the universal ribosomal protein uL15 family. As to quaternary structure, part of the 50S ribosomal subunit.

Its function is as follows. Binds to the 23S rRNA. The chain is Large ribosomal subunit protein uL15 from Methanosphaera stadtmanae (strain ATCC 43021 / DSM 3091 / JCM 11832 / MCB-3).